The following is an 885-amino-acid chain: DNA mismatch repair protein MutS (885 aa).

Residue 626–633 (GPNMGGKS) coordinates ATP.

It belongs to the DNA mismatch repair MutS family.

Functionally, this protein is involved in the repair of mismatches in DNA. It is possible that it carries out the mismatch recognition step. This protein has a weak ATPase activity. In Burkholderia ambifaria (strain MC40-6), this protein is DNA mismatch repair protein MutS.